Consider the following 480-residue polypeptide: Cysteine--tRNA ligase (480 aa).

Cys29 contributes to the Zn(2+) binding site. Residues 31–41 (PTVYADPHLGH) carry the 'HIGH' region motif. The Zn(2+) site is built by Cys220, His245, and Glu249. Residues 276-280 (KMAKS) carry the 'KMSKS' region motif. Residue Lys279 coordinates ATP.

Belongs to the class-I aminoacyl-tRNA synthetase family. Monomer. Zn(2+) is required as a cofactor.

It is found in the cytoplasm. It carries out the reaction tRNA(Cys) + L-cysteine + ATP = L-cysteinyl-tRNA(Cys) + AMP + diphosphate. In Thermus thermophilus (strain ATCC 27634 / DSM 579 / HB8), this protein is Cysteine--tRNA ligase.